A 327-amino-acid polypeptide reads, in one-letter code: Malate dehydrogenase (327 aa).

12-18 (GAAGQIG) serves as a coordination point for NAD(+). Positions 93 and 99 each coordinate substrate. Residues Asn106, Gln113, and 130–132 (VGN) each bind NAD(+). Substrate-binding residues include Asn132 and Arg163. The active-site Proton acceptor is the His188.

It belongs to the LDH/MDH superfamily. MDH type 2 family.

It catalyses the reaction (S)-malate + NAD(+) = oxaloacetate + NADH + H(+). Functionally, catalyzes the reversible oxidation of malate to oxaloacetate. This Cupriavidus pinatubonensis (strain JMP 134 / LMG 1197) (Cupriavidus necator (strain JMP 134)) protein is Malate dehydrogenase.